The sequence spans 900 residues: Zinc finger protein 574 (900 aa).

3 C2H2-type zinc fingers span residues 16 to 38 (YVCSECNQLYGSLEEVLVHQNSH), 76 to 98 (YQCLECGQLLLSPSQLLEHQELH), and 126 to 148 (YECVDCKALFASQEMWLSHRQTH). Serine 164 is subject to Phosphoserine. The segment at 213–235 (YKCSECSQLFQMPADFLEHQATH) adopts a C2H2-type 4 zinc-finger fold. The segment covering 244 to 254 (AEPATQQETQV) has biased composition (low complexity). The segment at 244–306 (AEPATQQETQ…RRNNSGESGG (63 aa)) is disordered. Residues 273–290 (HSYELRNELRNGEAIGRD) show a composition bias toward basic and acidic residues. Phosphoserine is present on serine 301. 10 consecutive C2H2-type zinc fingers follow at residues 312–334 (LFCSACDQLFLSPHQLQQHLRSH), 339–361 (FKCPLCSRVFPSPSSLDQHLGDH), 367–389 (FLCVDCGLAFGTEALLLAHRRAH), 395–416 (HSCPCGKTFVNLTKFLYHRRTH), 469–492 (YRCLLCSREFGKALQLTRHQRFVH), 498–520 (HKCSICGKMFKKKSHVRNHLRTH), 526–548 (FPCPDCSKPFNSPANLARHRLTH), 554–576 (YRCGDCGKAFTQSSTLRQHRLVH), 582–604 (YRCQECGVRFHRPYRLLMHRYHH), and 610–633 (YKCRECPRSFLLRRLLEVHQLVIH). The C2H2-type 15; degenerate zinc finger occupies 639 to 662 (YRCSSCGAAFPSSLRLREHRCAAA). The segment at 670–692 (FECGTCGKKVGSAARLQAHEAAH) adopts a C2H2-type 16 zinc-finger fold. The disordered stretch occupies residues 690-741 (AAHAAAGPGEVLAKEPPAPRASRATRTPVAPSPTALSGTTSAAPAAPARRRG). A Phosphoserine modification is found at serine 721. Positions 721-736 (SPTALSGTTSAAPAAP) are enriched in low complexity. Phosphothreonine is present on threonine 728. 4 C2H2-type zinc fingers span residues 742–764 (PECSECKKLFSTETSLQVHRRIH), 770–792 (YPCPDCGKAFRQSTHLKDHRRLH), 798–820 (FACEVCGKAFAISMRLAEHRRIH), and 826–848 (YSCPDCGKSYRSFSNLWKHRKTH). At arginine 836 the chain carries Asymmetric dimethylarginine.

It belongs to the krueppel C2H2-type zinc-finger protein family.

It localises to the nucleus. In terms of biological role, may be involved in transcriptional regulation. The protein is Zinc finger protein 574 (Znf574) of Mus musculus (Mouse).